Here is a 267-residue protein sequence, read N- to C-terminus: DNA repair protein RecO (267 aa).

The protein belongs to the RecO family.

Its function is as follows. Involved in DNA repair and RecF pathway recombination. In Prochlorococcus marinus (strain MIT 9313), this protein is DNA repair protein RecO.